We begin with the raw amino-acid sequence, 269 residues long: Centromere protein K (269 aa).

A compositionally biased stretch (acidic residues) spans 1–10 (MNQEDLDPDS). The disordered stretch occupies residues 1–20 (MNQEDLDPDSTTDVGDVTNT). 2 coiled-coil regions span residues 22–42 (EELI…QNKL) and 98–151 (QKLR…NKVE).

This sequence belongs to the CENP-K/MCM22 family. In terms of assembly, component of the CENPA-CAD complex, composed of CENPI, CENPK, CENPL, CENPO, CENPP, CENPQ, CENPR and CENPS. The CENPA-CAD complex interacts with the CENPA-NAC complex, at least composed of CENPA, CENPC, CENPH, CENPM, CENPN, CENPT and CENPU. Interacts directly with CENPH. Detected in several fetal organs with highest levels in fetal liver. In adults, it is weakly expressed in lung and placenta.

It localises to the nucleus. Its subcellular location is the chromosome. It is found in the centromere. The protein localises to the kinetochore. Its function is as follows. Component of the CENPA-CAD (nucleosome distal) complex, a complex recruited to centromeres which is involved in assembly of kinetochore proteins, mitotic progression and chromosome segregation. May be involved in incorporation of newly synthesized CENPA into centromeres via its interaction with the CENPA-NAC complex. Acts in coordination with KNL1 to recruit the NDC80 complex to the outer kinetochore. The polypeptide is Centromere protein K (CENPK) (Homo sapiens (Human)).